Reading from the N-terminus, the 317-residue chain is Acetyl-coenzyme A carboxylase carboxyl transferase subunit alpha (317 aa).

One can recognise a CoA carboxyltransferase C-terminal domain in the interval 39 to 293 (RLKKKSISLT…KTSLAQGVAE (255 aa)).

Belongs to the AccA family. As to quaternary structure, acetyl-CoA carboxylase is a heterohexamer composed of biotin carboxyl carrier protein (AccB), biotin carboxylase (AccC) and two subunits each of ACCase subunit alpha (AccA) and ACCase subunit beta (AccD).

Its subcellular location is the cytoplasm. The catalysed reaction is N(6)-carboxybiotinyl-L-lysyl-[protein] + acetyl-CoA = N(6)-biotinyl-L-lysyl-[protein] + malonyl-CoA. It functions in the pathway lipid metabolism; malonyl-CoA biosynthesis; malonyl-CoA from acetyl-CoA: step 1/1. Component of the acetyl coenzyme A carboxylase (ACC) complex. First, biotin carboxylase catalyzes the carboxylation of biotin on its carrier protein (BCCP) and then the CO(2) group is transferred by the carboxyltransferase to acetyl-CoA to form malonyl-CoA. This Marinobacter nauticus (strain ATCC 700491 / DSM 11845 / VT8) (Marinobacter aquaeolei) protein is Acetyl-coenzyme A carboxylase carboxyl transferase subunit alpha.